Consider the following 366-residue polypeptide: S-adenosylmethionine decarboxylase proenzyme 1 (366 aa).

Catalysis depends on residues glutamate 9 and glutamate 12. Substrate is bound at residue glutamate 68. Serine 69 serves as the catalytic Schiff-base intermediate with substrate; via pyruvic acid. Position 69 is a pyruvic acid (Ser); by autocatalysis (serine 69). Catalysis depends on cysteine 83, which acts as the Proton donor; for catalytic activity. Catalysis depends on proton acceptor; for processing activity residues serine 233 and histidine 246. Residue glutamate 250 coordinates substrate.

It belongs to the eukaryotic AdoMetDC family. It depends on pyruvate as a cofactor. In terms of processing, is synthesized initially as an inactive proenzyme. Formation of the active enzyme involves a self-maturation process in which the active site pyruvoyl group is generated from an internal serine residue via an autocatalytic post-translational modification. Two non-identical subunits are generated from the proenzyme in this reaction, and the pyruvate is formed at the N-terminus of the alpha chain, which is derived from the carboxyl end of the proenzyme. The post-translation cleavage follows an unusual pathway, termed non-hydrolytic serinolysis, in which the side chain hydroxyl group of the serine supplies its oxygen atom to form the C-terminus of the beta chain, while the remainder of the serine residue undergoes an oxidative deamination to produce ammonia and the pyruvoyl group blocking the N-terminus of the alpha chain.

The catalysed reaction is S-adenosyl-L-methionine + H(+) = S-adenosyl 3-(methylsulfanyl)propylamine + CO2. It functions in the pathway amine and polyamine biosynthesis; S-adenosylmethioninamine biosynthesis; S-adenosylmethioninamine from S-adenosyl-L-methionine: step 1/1. Its function is as follows. Essential for biosynthesis of the polyamines spermidine and spermine. Essential for polyamine homeostasis, and normal plant embryogenesis, growth and development. This chain is S-adenosylmethionine decarboxylase proenzyme 1, found in Arabidopsis thaliana (Mouse-ear cress).